The primary structure comprises 647 residues: Threonine--tRNA ligase (647 aa).

Residues 1–61 (MIKITFPDGA…TEDGAIEIVT (61 aa)) enclose the TGS domain. Positions 242-540 (DHRKLGKELD…LIENYKGAFP (299 aa)) are catalytic. Residues cysteine 336, histidine 387, and histidine 517 each contribute to the Zn(2+) site.

It belongs to the class-II aminoacyl-tRNA synthetase family. Homodimer. It depends on Zn(2+) as a cofactor.

It localises to the cytoplasm. It catalyses the reaction tRNA(Thr) + L-threonine + ATP = L-threonyl-tRNA(Thr) + AMP + diphosphate + H(+). Functionally, catalyzes the attachment of threonine to tRNA(Thr) in a two-step reaction: L-threonine is first activated by ATP to form Thr-AMP and then transferred to the acceptor end of tRNA(Thr). Also edits incorrectly charged L-seryl-tRNA(Thr). The sequence is that of Threonine--tRNA ligase from Streptococcus sanguinis (strain SK36).